The following is a 471-amino-acid chain: Tumor necrosis factor receptor superfamily member 1A (471 aa).

Residues 1–29 form the signal peptide; it reads MGLPTVPGLLLPLVLPALLADVYPAGVQG. Over 30–210 the chain is Extracellular; sequence LVPHPGDLEK…GKDSQDPGTT (181 aa). TNFR-Cys repeat units follow at residues 43–82, 83–125, 126–166, and 167–195; these read PCPQ…TDCR, VCAP…DTVC, GCRK…DTIC, and HCHM…KLCP. Cystine bridges form between Cys44–Cys58, Cys59–Cys72, Cys62–Cys81, Cys84–Cys99, Cys102–Cys117, Cys105–Cys125, and Cys127–Cys143. Asn54 is a glycosylation site (N-linked (GlcNAc...) asparagine). N-linked (GlcNAc...) asparagine glycans are attached at residues Asn145 and Asn151. Disulfide bonds link Cys146–Cys158, Cys149–Cys166, Cys168–Cys179, Cys182–Cys194, and Cys185–Cys190. The helical transmembrane segment at 211–233 threads the bilayer; that stretch reads VLLPLVIVFGLCLASFASVVLAC. The Cytoplasmic segment spans residues 234 to 471; that stretch reads RYQRWKPKLY…RLASEPRLLW (238 aa). The tract at residues 340–360 is N-SMase activation domain (NSD); that stretch reads TPGPPASTHLCTPVQKWEASA. A Death domain is found at 372–457; the sequence is PATLYAVVDG…GCLENIEEAL (86 aa).

As to quaternary structure, binding of TNF to the extracellular domain leads to homotrimerization. The aggregated death domains provide a novel molecular interface that interacts specifically with the death domain of TRADD. Various TRADD-interacting proteins such as TRAFS, RIPK1 and possibly FADD, are recruited to the complex by their association with TRADD. This complex activates at least two distinct signaling cascades, apoptosis and NF-kappa-B signaling. Interacts with BAG4, BABAM2, FEM1B, GRB2, SQSTM1 and TRPC4AP. Interacts directly with NOL3 (via CARD domain); inhibits TNF-signaling pathway. Interacts with SH3RF2, TRADD and RIPK1. SH3RF2 facilitates the recruitment of RIPK1 and TRADD to TNFRSF1A in a TNF-alpha-dependent process. Interacts with PGLYRP1; this interaction is important for cell death induction. Interacts (via death domain) with MADD (via death domain).

Its subcellular location is the cell membrane. It is found in the golgi apparatus membrane. Receptor for TNFSF2/TNF-alpha and homotrimeric TNFSF1/lymphotoxin-alpha. The adapter molecule FADD recruits caspase-8 to the activated receptor. The resulting death-inducing signaling complex (DISC) performs caspase-8 proteolytic activation which initiates the subsequent cascade of caspases (aspartate-specific cysteine proteases) mediating apoptosis. The chain is Tumor necrosis factor receptor superfamily member 1A (TNFRSF1A) from Bos taurus (Bovine).